Here is a 172-residue protein sequence, read N- to C-terminus: Phosphopantetheine adenylyltransferase (172 aa).

Thr14 is a substrate binding site. Residues 14–15 (TF) and His22 each bind ATP. Lys46, Leu78, and Arg92 together coordinate substrate. ATP contacts are provided by residues 93-95 (GLR), Glu103, and 128-134 (WLYISST).

It belongs to the bacterial CoaD family. Homohexamer. Requires Mg(2+) as cofactor.

It localises to the cytoplasm. It catalyses the reaction (R)-4'-phosphopantetheine + ATP + H(+) = 3'-dephospho-CoA + diphosphate. It functions in the pathway cofactor biosynthesis; coenzyme A biosynthesis; CoA from (R)-pantothenate: step 4/5. Reversibly transfers an adenylyl group from ATP to 4'-phosphopantetheine, yielding dephospho-CoA (dPCoA) and pyrophosphate. This chain is Phosphopantetheine adenylyltransferase, found in Lawsonia intracellularis (strain PHE/MN1-00).